A 349-amino-acid chain; its full sequence is MDIFNGLPDDVLVKILSFVPTKVAVSTSILSKRWEFLWMWLPRLDFGSPKTDLLAFLNTCQYDKEEEVGLVDFIDKKLPLHRAPFLAMYVCWKFLMNVGMKTYFHVRHLETRQREGKSLQDILSICPVLDDLSVICSVHQDVKEFTIIVPSLQSLTLFIENCEVFDGYVIDTPLKYLKLEDVHEEEHYCLLKKMPKLREAYVDVQLDDLKSLIGSITSVKRLNHMFREKSKILGQLLKDSPNLRVLNIFKVQGHVTLSTGVDCWNQPISVPECLLESLQIFNLSHYFGKQQDLDFVVYILKNACHLKTATILADEPEHLVPNLKELTLSPRASSTCQLSIRCGLGSERS.

In terms of domain architecture, F-box spans 1–47 (MDIFNGLPDDVLVKILSFVPTKVAVSTSILSKRWEFLWMWLPRLDFG). In terms of domain architecture, FBD spans 263–311 (CWNQPISVPECLLESLQIFNLSHYFGKQQDLDFVVYILKNACHLKTATI).

The protein is Probable FBD-associated F-box protein At5g38565 of Arabidopsis thaliana (Mouse-ear cress).